Consider the following 584-residue polypeptide: Probable lysosomal cobalamin transporter (584 aa).

10 consecutive transmembrane segments (helical) span residues 8-28, 46-66, 93-113, 144-164, 189-209, 313-333, 350-370, 376-396, 421-441, and 509-529; these read LIWI…STFV, IFTL…VALV, TVVY…IVPF, TLVF…VPVA, ALTF…VIYS, LLGG…MLLT, ILGK…AASV, VIFI…IATI, ATVM…MIVV, and GIVD…VLLI.

It belongs to the LIMR family. LMBRD1 subfamily.

It is found in the lysosome membrane. Probable lysosomal cobalamin transporter. Required to export cobalamin from lysosomes allowing its conversion to cofactors. The polypeptide is Probable lysosomal cobalamin transporter (Coccidioides immitis (strain RS) (Valley fever fungus)).